Here is a 252-residue protein sequence, read N- to C-terminus: Acetoacetate decarboxylase (252 aa).

The active-site Schiff-base intermediate with acetoacetate is Lys116.

It belongs to the ADC family.

The catalysed reaction is acetoacetate + H(+) = acetone + CO2. In terms of biological role, catalyzes the conversion of acetoacetate to acetone and carbon dioxide. This Paraburkholderia xenovorans (strain LB400) protein is Acetoacetate decarboxylase.